The following is a 198-amino-acid chain: Recombination protein RecR (198 aa).

The C4-type zinc-finger motif lies at 57–72 (CSVCGHITDRDPCYIC). Positions 80–175 (SVVCVVQEPK…KVTRIAHGLP (96 aa)) constitute a Toprim domain.

It belongs to the RecR family.

Functionally, may play a role in DNA repair. It seems to be involved in an RecBC-independent recombinational process of DNA repair. It may act with RecF and RecO. The chain is Recombination protein RecR from Bacillus mycoides (strain KBAB4) (Bacillus weihenstephanensis).